The sequence spans 459 residues: Hypotaurine/taurine--pyruvate aminotransferase (459 aa).

An N6-(pyridoxal phosphate)lysine modification is found at K287.

The protein belongs to the class-III pyridoxal-phosphate-dependent aminotransferase family. The cofactor is pyridoxal 5'-phosphate.

The catalysed reaction is hypotaurine + pyruvate = 2-sulfinoacetaldehyde + L-alanine. It carries out the reaction taurine + pyruvate = sulfoacetaldehyde + L-alanine. It participates in organosulfur degradation. Its function is as follows. Converts hypotaurine to alanine and sulfinoacetaldehyde, which desulfinates spontaneously to acetaldehyde and sulfite. Can also catalyze the degradation of taurine into alanine and sulfoacetaldehyde, which is stable. Has 2-fold higher aminotransferase activity with hypotaurine as the substrate. The protein is Hypotaurine/taurine--pyruvate aminotransferase of Paracoccus denitrificans (strain Pd 1222).